A 151-amino-acid polypeptide reads, in one-letter code: Transcriptional repressor NrdR (151 aa).

The segment at 3-34 is a zinc-finger region; the sequence is CPYCAYGESKVVDSRSTEDGSSIRRRRECLKC. An ATP-cone domain is found at 49 to 139; the sequence is ILVIKKNMSR…VYRQFKDINT (91 aa).

Belongs to the NrdR family. Zn(2+) serves as cofactor.

Functionally, negatively regulates transcription of bacterial ribonucleotide reductase nrd genes and operons by binding to NrdR-boxes. The chain is Transcriptional repressor NrdR from Clostridium botulinum (strain Loch Maree / Type A3).